Reading from the N-terminus, the 165-residue chain is MDVALKLLLLAALTLLASAQTPIDYKDLSTTLQEHIDKALEEGNRKFGGRHHVALDSFVTPAVTRQSILNVNVFLKVTTCMKTRSYKHRPECNTQKRSTPKINCLVCKMKNGTELVHCARKIDILHGEHKEIRDNCDVTRIGVSSLMAQTMPDDYRKQVGCLGCI.

Residues 1–19 form the signal peptide; it reads MDVALKLLLLAALTLLASA. 2 cysteine pairs are disulfide-bonded: Cys-80-Cys-92 and Cys-104-Cys-118.

In terms of biological role, involved in hypoxia tolerance. The polypeptide is Cystatin-like protein (Clarias batrachus (Walking catfish)).